Consider the following 299-residue polypeptide: ATP phosphoribosyltransferase (299 aa).

Belongs to the ATP phosphoribosyltransferase family. Long subfamily. In terms of assembly, equilibrium between an active dimeric form, an inactive hexameric form and higher aggregates. Interconversion between the various forms is largely reversible and is influenced by the natural substrates and inhibitors of the enzyme. Mg(2+) serves as cofactor.

It localises to the cytoplasm. It catalyses the reaction 1-(5-phospho-beta-D-ribosyl)-ATP + diphosphate = 5-phospho-alpha-D-ribose 1-diphosphate + ATP. Its pathway is amino-acid biosynthesis; L-histidine biosynthesis; L-histidine from 5-phospho-alpha-D-ribose 1-diphosphate: step 1/9. Feedback inhibited by histidine. Its function is as follows. Catalyzes the condensation of ATP and 5-phosphoribose 1-diphosphate to form N'-(5'-phosphoribosyl)-ATP (PR-ATP). Has a crucial role in the pathway because the rate of histidine biosynthesis seems to be controlled primarily by regulation of HisG enzymatic activity. The protein is ATP phosphoribosyltransferase of Edwardsiella ictaluri (strain 93-146).